The primary structure comprises 637 residues: Threonine--tRNA ligase (637 aa).

The TGS domain maps to 1–61; it reads MPVITLPDGS…DKDAELAIVT (61 aa). The interval 242-533 is catalytic; the sequence is DHRKIGKKLG…LIEHYEGAFP (292 aa). 3 residues coordinate Zn(2+): Cys333, His384, and His510.

It belongs to the class-II aminoacyl-tRNA synthetase family. As to quaternary structure, homodimer. Requires Zn(2+) as cofactor.

It is found in the cytoplasm. It catalyses the reaction tRNA(Thr) + L-threonine + ATP = L-threonyl-tRNA(Thr) + AMP + diphosphate + H(+). Its function is as follows. Catalyzes the attachment of threonine to tRNA(Thr) in a two-step reaction: L-threonine is first activated by ATP to form Thr-AMP and then transferred to the acceptor end of tRNA(Thr). Also edits incorrectly charged L-seryl-tRNA(Thr). The chain is Threonine--tRNA ligase from Hahella chejuensis (strain KCTC 2396).